The sequence spans 595 residues: P2X purinoceptor 7 (595 aa).

At 1–22 the chain is on the cytoplasmic side; it reads MPACCSWNDVLQYETNKVTRIQ. The S-palmitoyl cysteine moiety is linked to residue C4. A helical membrane pass occupies residues 23 to 46; it reads STNYGTVKWVLHMIVFSYISFALV. The Extracellular segment spans residues 47-328; that stretch reads SDKLYQRKEP…ILVFGTGGKF (282 aa). N-linked (GlcNAc...) asparagine glycosylation is present at N74. Intrachain disulfides connect C119-C168, C129-C152, and C135-C162. 2 positions are modified to ADP-ribosylarginine; by ART2B: R125 and R133. A glycan (N-linked (GlcNAc...) asparagine) is linked at N187. ATP is bound at residue T189. N-linked (GlcNAc...) asparagine glycosylation is found at N202 and N213. C216 and C226 are disulfide-bonded. The N-linked (GlcNAc...) asparagine glycan is linked to N241. Cysteines 260 and 269 form a disulfide. The ATP site is built by R294 and K311. A helical transmembrane segment spans residues 329–353; that stretch reads DIIQLVVYIGSTLSYFGLATVCIDL. S342 contacts Na(+). The Cytoplasmic segment spans residues 354-595; the sequence is LINTYSSAFC…GQYSGFKYPY (242 aa). Residues 360-377 form a C-cys anchor region; it reads SAFCRSGVYPYCKCCEPC. S-palmitoyl cysteine attachment occurs at residues C363, C374, and C377. Position 390 is a phosphoserine (S390). The interval 395–595 is cytoplasmic ballast; that stretch reads KPTLKYVSFV…GQYSGFKYPY (201 aa). Residues C479, C499, and C506 each coordinate Zn(2+). R546, H547, Y550, and A567 together coordinate GTP. Residue C572 participates in Zn(2+) binding. Residues K583, S589, and G590 each coordinate GTP.

Belongs to the P2X receptor family. As to quaternary structure, homotrimers. Interacts with LAMA3, ITGB2, ACTB, ACTN4, SVIL, MPP3, HSPA1, HSPCB, HSPA8, PIK230 and PTPRB. Interacts (via C-terminus) with EMP2. In terms of processing, phosphorylation results in its inactivation. Post-translationally, ADP-ribosylation at Arg-125 is necessary and sufficient to activate P2RX7 and gate the channel. Palmitoylation of several cysteines in the C-terminal cytoplasmic tail is required for efficient localization to cell surface. Palmitoylation prevents channel desensitization by physically anchoring the palmitoylated groups to the membrane.

The protein resides in the cell membrane. The catalysed reaction is Ca(2+)(in) = Ca(2+)(out). The enzyme catalyses K(+)(in) = K(+)(out). It carries out the reaction Na(+)(in) = Na(+)(out). Activated by high extracellular ATP levels (0.1-2.5 mM). The synthetic analog 2'(3')-O-(4-benzoylbenzoyl)ATP (BzATP) acts as a potent agonist. Does not undergo desensitization, instead, undergoes a facilitation process where currents progressively increase with repetitive or prolonged agonist application. Palmitoylation prevents channel desensitization. The permeability of the P2RX7 channel is modulated by the amount of cholesterol in the plasma membrane. Its function is as follows. ATP-gated nonselective transmembrane cation channel. Requires high millimolar-range concentrations of ATP to become activated. ATP binding trigers the rapid opening of the channel and allows Na(+) and Ca(2+) influx and K(+) efflux. Has also the ability to form a large pore in the cell membrane, allowing the passage of large cationic molecules. In microglia, may mediate NADPH transport across the plasma membrane. In immune cells, P2RX7 acts as a molecular sensor in pathological inflammatory states by detecting and responding to high local concentrations of extracellar ATP. In microglial cells, P2RX7 activation leads to the release of pro-inflammatory cytokines, such as IL-1beta and IL-18, through the activation of the NLRP3 inflammasome and caspase-1. Cooperates with KCNK6 to activate NLRP3 inflammasome. Activates death pathways leading to apoptosis and autophagy. Activates death pathways leading to pyroptosis. The sequence is that of P2X purinoceptor 7 (P2rx7) from Mus musculus (Mouse).